The following is a 645-amino-acid chain: MGSGDTRGESSLVAKPIEIILNKLPHAILAQQQFQKYITSPIYRYLSKLLLFREVAWPESTKDTQKGQVGIFSFQNNYADSATTFRILAHLDEQRYPLPNGAAEKNLPSLFEGFKATVSIIQQRLLLDNVDGATNSDKEKYVQLPDINTGFVNKTYSRIDLTHLLEDVETNVENLSINKTLEMDELTRLDSMINELESRKLKILERVKHIDSKSTNLENDVTLIKDRINFIEEYSLEADREQSLRKQMEEERSSEASSFTQNEEAISSLYDVESKDTRLKDFYKMPHEKSHDKNRQMHIISETYSRNSTAFRMTIPHGEHGNSITALDFDTPWGTLCSSSYQDRIVKVWDLNHGIQVGELPGHLATVNCMQIDKKNYNMLITGSKDATLKLWDLNLSRELYLDHSPLKEKTEEIVTPCIHNFELHKDEITALSFDSEALVSGSRDKKIFHWDLTTGKCIQQLDLIFTPTHSDIKMPARSLNNGTCLLGTEAPMIGALQCYNSALATGTKDGLVRLWDLRVGKPVRLLEGHTDGITSLKFDSEKLVTGSMDNSVRIWDLRTSSILDVIAYDLPVSSLDFDGKLITVGANEGGVNVFNMERDEHWMTPEPPHSLDGDELSRRIAIVKYKDGFLINGHNDGDINVWTL.

Positions 1 to 274 are required for interaction with FIS1 and MDV1; that stretch reads MGSGDTRGES…AISSLYDVES (274 aa). The tract at residues 74-126 is sufficient for interaction with FIS1; sequence FQNNYADSATTFRILAHLDEQRYPLPNGAAEKNLPSLFEGFKATVSIIQQRLL. The stretch at 160–253 forms a coiled coil; the sequence is DLTHLLEDVE…LRKQMEEERS (94 aa). Residues 242 to 254 show a composition bias toward basic and acidic residues; that stretch reads QSLRKQMEEERSS. The tract at residues 242–262 is disordered; sequence QSLRKQMEEERSSEASSFTQN. WD repeat units follow at residues 319-359, 362-402, 424-463, 481-528, 529-568, 570-605, and 616-645; these read EHGN…QVGE, GHLA…ELYL, LHKD…QQLD, NNGT…RLLE, GHTD…DVIA, DLPV…HWMT, and ELSR…VWTL.

Belongs to the WD repeat MDV1/CAF4 family. Interacts with DNM1, FIS1 and MDV1, components of the mitochondrial fission machinery. Interacts via its WD repeats with DNM1. Interacts with CCR4 and NOT1, components of the CCR4-NOT complex. It is however not a component of the 1.0 MDa CCR4-NOT core complex, but appears to be part of a less characterized, 1.9 MDa CCR4-NOT complex. Interacts with DBF2, another likely component of the 1.9 MDa complex. Interacts with SRB9 and SRB10, components of the SRB8-11 complex.

It localises to the mitochondrion outer membrane. Functionally, involved in mitochondrial fission. Has a partially redundant function to MDV1 in acting as an adapter protein, binding to FIS1 on the mitochondrial outer membrane and recruiting the dynamin-like GTPase DNM1 to form mitochondrial fission complexes. Plays a key role in determining the polarized localization of those DNM1 clusters that are not immediately involved in the mitochondrial fission process. The chain is CCR4-associated factor 4 (CAF4) from Saccharomyces cerevisiae (strain YJM789) (Baker's yeast).